The primary structure comprises 99 residues: Class II hydrophobin 3 (99 aa).

Positions 1-18 (MRIDILATAALLAQLASA) are cleaved as a signal peptide. Intrachain disulfides connect cysteine 31-cysteine 79, cysteine 40-cysteine 70, and cysteine 41-cysteine 53.

Belongs to the cerato-ulmin hydrophobin family. In terms of assembly, homodimer. Homodimers further self-assemble to form highly ordered films at water-air interfaces through intermolecular interactions.

It is found in the secreted. Its subcellular location is the cell wall. Aerial growth, conidiation, and dispersal of filamentous fungi in the environment rely upon a capability of their secreting small amphipathic proteins called hydrophobins (HPBs) with low sequence identity. Class I can self-assemble into an outermost layer of rodlet bundles on aerial cell surfaces, conferring cellular hydrophobicity that supports fungal growth, development and dispersal; whereas Class II form highly ordered films at water-air interfaces through intermolecular interactions but contribute nothing to the rodlet structure. Hyd3 is a class II hydrophobin required for barley root colonization. Hyd1 and Hyd3 are jointly required for conidial hydrophobicity and dispersal, but seem not to be involved in mycelia hydrophobicity. Inhibits conidial germination in environments not suitable for mycelial growth. Plays probably a role in intraspecific signaling or hyphal fusion. The sequence is that of Class II hydrophobin 3 from Bionectria ochroleuca (Gliocladium roseum).